A 1056-amino-acid polypeptide reads, in one-letter code: PAX-interacting protein 1 (1056 aa).

BRCT domains lie at 8 to 93 and 94 to 183; these read VPEE…GFSP and ESCQ…FYHP. The interaction with PAGR1 stretch occupies residues 94–183; sequence ESCQIFFGLT…RRKDEAFYHP (90 aa). Positions 188-205 are enriched in acidic residues; sequence YEEEEEEEEEGDNEEQDS. Disordered regions lie at residues 188 to 276, 393 to 412, and 419 to 486; these read YEEE…QRRL, THVLQQHHPPQQPQQQHPAL, and MQLQ…FQQQ. Positions 214-223 are enriched in low complexity; that stretch reads SSVASSAVAS. A phosphoserine mark is found at S223 and S230. Low complexity-rich tracts occupy residues 396–412, 419–435, and 445–486; these read LQQHHPPQQPQQQHPAL, MQLQQQQQQQQQQQQQP, and QFPQ…FQQQ. Residues 577–1056 form an interaction with TP53BP1 region; the sequence is QLFGHDPAVE…TLDYESYKFN (480 aa). 4 BRCT domains span residues 588–681, 688–776, 853–934, and 955–989; these read PEES…RALH, PGGK…VQYS, TPLV…NYIL, and HVSPLFKTKYFYITPGICPSLATMKAIVECAGGKV. A Nuclear localization signal motif is present at residues 655 to 672; that stretch reads RKRCVTAHWLNTVLKKKK.

In terms of assembly, interacts with the C-terminal transactivation domain of PAX2. Forms a constitutive complex with PAGR1 independently of the MLL2/MLL3 complex. Interacts with TP53BP1 (when phosphorylated at the N-terminus by ATM). Interacts with HLTF. Component of the KMT2 family MLL2/MLL3 complex (also named ASCOM complex), at least composed of the HMTs KMT2D and/or KMT2C, the common subunits ASH2L, RBBP5, WDR5 and DPY30, and the complex type-specific subunits PAXIP1/PTIP, PAGR1, NCOA6 and KDM6A; required for the association of PAGR1 with the MLL2/MLL3 complex. Interacts with NUPR1; this interaction prevents PAXIP1 inhibition of PAX2 transcription factor activity. As to expression, expression detected in all tissues examined, including brain stem, cerebellum, cortex, heart, spleen, kidney, liver, thymus and lung.

Its subcellular location is the nucleus matrix. The protein resides in the chromosome. Functionally, involved in DNA damage response and in transcriptional regulation through histone methyltransferase (HMT) complexes such as the MLL2/MLL3 complex. Plays a role in early development. In DNA damage response is required for cell survival after ionizing radiation. In vitro shown to be involved in the homologous recombination mechanism for the repair of double-strand breaks (DSBs). Its localization to DNA damage foci requires Rnf8 and Ube2n. Recruits Tp53bp1 to DNA damage foci and, at least in particular repair processes, effective DNA damage response appears to require the association with Tp53bp1 phosphorylated by Atm. Together with Tp53bp1 regulates Atm association. Proposed to recruit Pagr1 to sites of DNA damage and the Pagr1:Paxip1 complex is required for cell survival in response to DNA damage independently of the MLL2/MLL3 complex. However, this function has been questioned. Promotes ubiquitination of PCNA following UV irradiation and may regulate recruitment of polymerase eta and Rad51 to chromatin after DNA damage. Proposed to be involved in transcriptional regulation by linking MLL-containing histone methyltransferase (HMT) complexes to gene promoters by interacting with promoter-bound transcription factors such as Pax2. Associates with gene promoters that are known to be regulated by Kmt2d/Mll2. During immunoglobulin class switching in activated B-cells is involved in trimethylation of histone H3 at 'Lys-4' and in transcription initiation of downstream switch regions at the immunoglobulin heavy-chain (Igh) locus; this function appears to involve the recruitment of MLL-containing HMT complexes. Conflictingly, its function in transcriptional regulation during immunoglobulin class switching is reported to be independent of the MLL2/MLL3 complex. This chain is PAX-interacting protein 1 (Paxip1), found in Mus musculus (Mouse).